Reading from the N-terminus, the 1382-residue chain is Histone-lysine N-methyltransferase SUVR5 (1382 aa).

2 disordered regions span residues 43 to 62 (TVTG…SEPK) and 354 to 373 (GNTN…NTPE). 3 consecutive C2H2-type zinc fingers follow at residues 735–758 (FACA…EERH), 769–792 (LQCI…QAVH), and 838–861 (FVCK…QAEH). Positions 915–935 (RRMQGSKSLGTEGNTEAGVSP) are disordered. Positions 919–928 (GSKSLGTEGN) are enriched in polar residues. A Pre-SET domain is found at 1145–1221 (LRCSCRSSVC…TCQNRVLQNG (77 aa)). Zn(2+) is bound by residues C1147, C1149, C1154, C1159, C1182, C1203, C1207, C1209, and C1213. Residues 1224–1356 (AKLEVFRTES…AGEEITRDYG (133 aa)) form the SET domain. S-adenosyl-L-methionine-binding positions include 1234–1236 (KGW), Y1277, and 1313–1314 (NH). Residue C1316 coordinates Zn(2+). Y1355 contributes to the S-adenosyl-L-methionine binding site. One can recognise a Post-SET domain in the interval 1366 to 1382 (NEHPCHCKATNCRGLLS). 3 residues coordinate Zn(2+): C1370, C1372, and C1377.

The protein belongs to the class V-like SAM-binding methyltransferase superfamily. Component of a regulatory complex with LDL1/SWP1. Interacts with LDL1/SWP1.

It is found in the nucleus. It localises to the chromosome. The enzyme catalyses L-lysyl-[histone] + S-adenosyl-L-methionine = N(6)-methyl-L-lysyl-[histone] + S-adenosyl-L-homocysteine + H(+). Histone methyltransferase that functions together with its binding partner LDL1/SWP1 as one of the regulators of flower timing in Arabidopsis. Mediates H3K9me2 deposition and regulates gene expression in a DNA methylation-independent manner. Binds DNA through its zinc fingers and represses the expression of a subset of stimulus response genes. May represent a novel mechanism for plants to regulate their chromatin and transcriptional state, which may allow for the adaptability and modulation necessary to rapidly respond to environment or developmental cues. This is Histone-lysine N-methyltransferase SUVR5 from Arabidopsis thaliana (Mouse-ear cress).